The following is a 95-amino-acid chain: Small ribosomal subunit protein bS18 (95 aa).

This sequence belongs to the bacterial ribosomal protein bS18 family. As to quaternary structure, part of the 30S ribosomal subunit. Forms a tight heterodimer with protein bS6.

Functionally, binds as a heterodimer with protein bS6 to the central domain of the 16S rRNA, where it helps stabilize the platform of the 30S subunit. This Rickettsia canadensis (strain McKiel) protein is Small ribosomal subunit protein bS18.